We begin with the raw amino-acid sequence, 246 residues long: Putative pectinesterase 57 (246 aa).

Residues N127 and N143 are each glycosylated (N-linked (GlcNAc...) asparagine). Position 152 (T152) interacts with substrate. N-linked (GlcNAc...) asparagine glycosylation is present at N174. D205 acts as the Proton donor in catalysis. The Nucleophile role is filled by D226.

This sequence belongs to the pectinesterase family.

The enzyme catalyses [(1-&gt;4)-alpha-D-galacturonosyl methyl ester](n) + n H2O = [(1-&gt;4)-alpha-D-galacturonosyl](n) + n methanol + n H(+). Its pathway is glycan metabolism; pectin degradation; 2-dehydro-3-deoxy-D-gluconate from pectin: step 1/5. In terms of biological role, acts in the modification of cell walls via demethylesterification of cell wall pectin. In Arabidopsis thaliana (Mouse-ear cress), this protein is Putative pectinesterase 57 (PME57).